The sequence spans 20 residues: Cytochrome c oxidase subunit 5B heart, mitochondrial (20 aa).

The segment at 1–20 (XXLKGIPTDEEQATGLEEYA) is disordered.

Belongs to the cytochrome c oxidase subunit 5B family. Component of the cytochrome c oxidase (complex IV, CIV), a multisubunit enzyme composed of 14 subunits. The complex is composed of a catalytic core of 3 subunits MT-CO1, MT-CO2 and MT-CO3, encoded in the mitochondrial DNA, and 11 supernumerary subunits COX4I, COX5A, COX5B, COX6A, COX6B, COX6C, COX7A, COX7B, COX7C, COX8 and NDUFA4, which are encoded in the nuclear genome. The complex exists as a monomer or a dimer and forms supercomplexes (SCs) in the inner mitochondrial membrane with NADH-ubiquinone oxidoreductase (complex I, CI) and ubiquinol-cytochrome c oxidoreductase (cytochrome b-c1 complex, complex III, CIII), resulting in different assemblies (supercomplex SCI(1)III(2)IV(1) and megacomplex MCI(2)III(2)IV(2)).

It is found in the mitochondrion inner membrane. It participates in energy metabolism; oxidative phosphorylation. In terms of biological role, component of the cytochrome c oxidase, the last enzyme in the mitochondrial electron transport chain which drives oxidative phosphorylation. The respiratory chain contains 3 multisubunit complexes succinate dehydrogenase (complex II, CII), ubiquinol-cytochrome c oxidoreductase (cytochrome b-c1 complex, complex III, CIII) and cytochrome c oxidase (complex IV, CIV), that cooperate to transfer electrons derived from NADH and succinate to molecular oxygen, creating an electrochemical gradient over the inner membrane that drives transmembrane transport and the ATP synthase. Cytochrome c oxidase is the component of the respiratory chain that catalyzes the reduction of oxygen to water. Electrons originating from reduced cytochrome c in the intermembrane space (IMS) are transferred via the dinuclear copper A center (CU(A)) of subunit 2 and heme A of subunit 1 to the active site in subunit 1, a binuclear center (BNC) formed by heme A3 and copper B (CU(B)). The BNC reduces molecular oxygen to 2 water molecules using 4 electrons from cytochrome c in the IMS and 4 protons from the mitochondrial matrix. The sequence is that of Cytochrome c oxidase subunit 5B heart, mitochondrial from Oncorhynchus mykiss (Rainbow trout).